We begin with the raw amino-acid sequence, 336 residues long: Protein-glutamate methylesterase/protein-glutamine glutaminase 3 (336 aa).

In terms of domain architecture, Response regulatory spans 2–119 (KIAIVNDMPM…PNPKEAAAPL (118 aa)). Residue D53 is modified to 4-aspartylphosphate. The CheB-type methylesterase domain occupies 147–336 (PARRDRLVAI…APRLVEVFTQ (190 aa)). Residues S159, H186, and D279 contribute to the active site.

This sequence belongs to the CheB family. Post-translationally, phosphorylated by CheA. Phosphorylation of the N-terminal regulatory domain activates the methylesterase activity.

It localises to the cytoplasm. It catalyses the reaction [protein]-L-glutamate 5-O-methyl ester + H2O = L-glutamyl-[protein] + methanol + H(+). The enzyme catalyses L-glutaminyl-[protein] + H2O = L-glutamyl-[protein] + NH4(+). In terms of biological role, involved in chemotaxis. Part of a chemotaxis signal transduction system that modulates chemotaxis in response to various stimuli. Catalyzes the demethylation of specific methylglutamate residues introduced into the chemoreceptors (methyl-accepting chemotaxis proteins or MCP) by CheR. Also mediates the irreversible deamidation of specific glutamine residues to glutamic acid. In Pseudomonas savastanoi pv. phaseolicola (strain 1448A / Race 6) (Pseudomonas syringae pv. phaseolicola (strain 1448A / Race 6)), this protein is Protein-glutamate methylesterase/protein-glutamine glutaminase 3.